A 356-amino-acid chain; its full sequence is Uroporphyrinogen decarboxylase (356 aa).

Substrate is bound by residues 27 to 31, aspartate 77, tyrosine 154, serine 209, and histidine 327; that span reads RQAGR.

It belongs to the uroporphyrinogen decarboxylase family. In terms of assembly, homodimer.

The protein localises to the cytoplasm. It carries out the reaction uroporphyrinogen III + 4 H(+) = coproporphyrinogen III + 4 CO2. It functions in the pathway porphyrin-containing compound metabolism; protoporphyrin-IX biosynthesis; coproporphyrinogen-III from 5-aminolevulinate: step 4/4. Catalyzes the decarboxylation of four acetate groups of uroporphyrinogen-III to yield coproporphyrinogen-III. The polypeptide is Uroporphyrinogen decarboxylase (Aromatoleum aromaticum (strain DSM 19018 / LMG 30748 / EbN1) (Azoarcus sp. (strain EbN1))).